A 156-amino-acid chain; its full sequence is Cellulose synthase operon protein D (156 aa).

It participates in glycan metabolism; bacterial cellulose biosynthesis. Functionally, may have a major role in the perfection of crystallization, involved either in the pore structure itself or in the organization of the pores within the linear array of terminal synthesizing complexes (TCs). In Komagataeibacter xylinus (Gluconacetobacter xylinus), this protein is Cellulose synthase operon protein D.